The sequence spans 77 residues: MSGLGILVLTLLLLVYMATSHQDAGEKQATQRDAINVRRRRSLTRRVAEECEESCEDEEKHCCNTNNGPSCAPQCFG.

The signal sequence occupies residues 1–18 (MSGLGILVLTLLLLVYMA). The propeptide occupies 19 to 44 (TSHQDAGEKQATQRDAINVRRRRSLT). Intrachain disulfides connect Cys-51/Cys-63, Cys-55/Cys-71, and Cys-62/Cys-75. The residue at position 76 (Phe-76) is a Phenylalanine amide.

It belongs to the conotoxin O3 superfamily. As to expression, expressed by the venom duct.

It is found in the secreted. In Conus arenatus (Sand-dusted cone), this protein is Conotoxin ArMSGL-0141.